The sequence spans 378 residues: Cobalt-precorrin-5B C(1)-methyltransferase (378 aa).

This sequence belongs to the CbiD family.

The enzyme catalyses Co-precorrin-5B + S-adenosyl-L-methionine = Co-precorrin-6A + S-adenosyl-L-homocysteine. Its pathway is cofactor biosynthesis; adenosylcobalamin biosynthesis; cob(II)yrinate a,c-diamide from sirohydrochlorin (anaerobic route): step 6/10. Functionally, catalyzes the methylation of C-1 in cobalt-precorrin-5B to form cobalt-precorrin-6A. The polypeptide is Cobalt-precorrin-5B C(1)-methyltransferase (Methanococcus aeolicus (strain ATCC BAA-1280 / DSM 17508 / OCM 812 / Nankai-3)).